The sequence spans 375 residues: Succinyl-diaminopimelate desuccinylase (375 aa).

Residue H66 coordinates Zn(2+). Residue D68 is part of the active site. D99 contributes to the Zn(2+) binding site. Residue E133 is the Proton acceptor of the active site. E134, E162, and H348 together coordinate Zn(2+).

Belongs to the peptidase M20A family. DapE subfamily. As to quaternary structure, homodimer. It depends on Zn(2+) as a cofactor. Co(2+) is required as a cofactor.

The catalysed reaction is N-succinyl-(2S,6S)-2,6-diaminopimelate + H2O = (2S,6S)-2,6-diaminopimelate + succinate. It participates in amino-acid biosynthesis; L-lysine biosynthesis via DAP pathway; LL-2,6-diaminopimelate from (S)-tetrahydrodipicolinate (succinylase route): step 3/3. Catalyzes the hydrolysis of N-succinyl-L,L-diaminopimelic acid (SDAP), forming succinate and LL-2,6-diaminopimelate (DAP), an intermediate involved in the bacterial biosynthesis of lysine and meso-diaminopimelic acid, an essential component of bacterial cell walls. In Klebsiella pneumoniae subsp. pneumoniae (strain ATCC 700721 / MGH 78578), this protein is Succinyl-diaminopimelate desuccinylase.